The following is a 533-amino-acid chain: NAD(P)H-quinone oxidoreductase chain 4 1 (533 aa).

The next 14 helical transmembrane spans lie at 6-26, 37-57, 87-107, 113-133, 137-157, 169-189, 209-229, 243-263, 277-297, 311-331, 332-352, 376-396, 417-437, and 461-481; these read FPWL…IPLI, YSLF…WQHF, LSMP…LASW, PKLF…VFTA, MLFF…ISIW, FILY…ALAF, WLEL…LSIF, NAPG…YALI, FAPV…LNAF, ISHM…GLNG, ALLQ…LAGV, FALF…SGFV, VTIL…LSML, and LFVA…PKLT.

It belongs to the complex I subunit 4 family.

The protein resides in the cellular thylakoid membrane. The enzyme catalyses a plastoquinone + NADH + (n+1) H(+)(in) = a plastoquinol + NAD(+) + n H(+)(out). It carries out the reaction a plastoquinone + NADPH + (n+1) H(+)(in) = a plastoquinol + NADP(+) + n H(+)(out). Functionally, NDH-1 shuttles electrons from NAD(P)H, via FMN and iron-sulfur (Fe-S) centers, to quinones in the respiratory chain. The immediate electron acceptor for the enzyme in this species is believed to be plastoquinone. Couples the redox reaction to proton translocation (for every two electrons transferred, four hydrogen ions are translocated across the cytoplasmic membrane), and thus conserves the redox energy in a proton gradient. This is NAD(P)H-quinone oxidoreductase chain 4 1 from Synechococcus elongatus (strain ATCC 33912 / PCC 7942 / FACHB-805) (Anacystis nidulans R2).